The primary structure comprises 629 residues: Pescadillo homolog (629 aa).

The 94-residue stretch at arginine 321–isoleucine 414 folds into the BRCT domain. Disordered regions lie at residues lysine 439–aspartate 470, glutamate 488–proline 568, and isoleucine 598–lysine 629. Phosphoserine occurs at positions 453 and 457. Composition is skewed to acidic residues over residues aspartate 454–aspartate 470 and valine 498–aspartate 523. Residues glutamate 524–lysine 535 are compositionally biased toward basic and acidic residues. Positions lysine 542 to valine 551 are enriched in basic residues. Basic and acidic residues-rich tracts occupy residues histidine 552–leucine 561 and isoleucine 598–alanine 617. The stretch at lysine 584–leucine 627 forms a coiled coil. Residues alanine 618–lysine 629 show a composition bias toward low complexity.

The protein belongs to the pescadillo family.

It is found in the nucleus. The protein localises to the nucleolus. Its subcellular location is the nucleoplasm. Its function is as follows. Required for maturation of ribosomal RNAs and formation of the large ribosomal subunit. This chain is Pescadillo homolog, found in Drosophila erecta (Fruit fly).